A 323-amino-acid chain; its full sequence is o-succinylbenzoate synthase (323 aa).

Lys134 acts as the Proton donor in catalysis. Positions 162, 191, and 214 each coordinate Mg(2+). Residue Lys236 is the Proton acceptor of the active site.

The protein belongs to the mandelate racemase/muconate lactonizing enzyme family. MenC type 1 subfamily. It depends on a divalent metal cation as a cofactor.

The catalysed reaction is (1R,6R)-6-hydroxy-2-succinyl-cyclohexa-2,4-diene-1-carboxylate = 2-succinylbenzoate + H2O. It participates in quinol/quinone metabolism; 1,4-dihydroxy-2-naphthoate biosynthesis; 1,4-dihydroxy-2-naphthoate from chorismate: step 4/7. Its pathway is quinol/quinone metabolism; menaquinone biosynthesis. Its function is as follows. Converts 2-succinyl-6-hydroxy-2,4-cyclohexadiene-1-carboxylate (SHCHC) to 2-succinylbenzoate (OSB). In Yersinia pseudotuberculosis serotype O:1b (strain IP 31758), this protein is o-succinylbenzoate synthase.